Reading from the N-terminus, the 424-residue chain is Serine incorporator 5 (424 aa).

Over 1 to 6 the chain is Extracellular; that stretch reads MYALYF. A helical transmembrane segment spans residues 7 to 23; it reads ILVVVLCCIMMSTTVAH. Over 24-52 the chain is Cytoplasmic; that stretch reads KMKEHIPFFEDMCKGIKAGDTCEKLVGYS. The chain crosses the membrane as a helical span at residues 53 to 73; that stretch reads AVYRVCFGMACFFFIFCLLTL. At 74–87 the chain is on the extracellular side; the sequence is KINNSKSCRAHIHN. Asn-76 carries N-linked (GlcNAc...) asparagine glycosylation. Residues 88-108 form a helical membrane-spanning segment; the sequence is GFWFFKLLLLGAMCSGAFFIP. Residues 109-119 are Cytoplasmic-facing; sequence DQDTFLNAWRY. The chain crosses the membrane as a helical span at residues 120-140; it reads VGAVGGFLFIGIQLLLLVEFA. Over 141 to 161 the chain is Extracellular; it reads HKWNKNWTAGTASNKLWYASL. The N-linked (GlcNAc...) asparagine glycan is linked to Asn-146. Residues 162–182 traverse the membrane as a helical segment; that stretch reads ALVTLIMYSIATGGLVLMAVF. Residues 183–193 are Cytoplasmic-facing; that stretch reads YTQKDGCMENK. A helical membrane pass occupies residues 194–214; it reads ILLGVNGGLCVLISLVAISPC. The Extracellular portion of the chain corresponds to 215–221; sequence VQNRQPH. A helical transmembrane segment spans residues 222–242; sequence SGLLQSGVISCYVTYLTFSAL. The Cytoplasmic portion of the chain corresponds to 243 to 274; that stretch reads SSKPAEVVLDEHGKNVTICVPDFGQDLYRDEN. Residues 275–295 form a helical membrane-spanning segment; the sequence is LVTILGTSLLIGCILYSCLTS. The Extracellular portion of the chain corresponds to 296 to 348; the sequence is TTRSSSDALQGRYAAPELEIARCCFCFSPGGEDTEEQQQGKEGPRVIYDEKKG. The helical transmembrane segment at 349 to 369 threads the bilayer; it reads TVYIYSYFHFVFFLASLYVMM. Over 370-391 the chain is Cytoplasmic; the sequence is TVTNWFNYESANIESFFSGSWS. A helical transmembrane segment spans residues 392-412; sequence IFWVKMASCWICVLLYLCTLV. The Extracellular segment spans residues 413 to 424; it reads APLCCPTREFSV.

Belongs to the TDE1 family.

It is found in the cell membrane. It catalyses the reaction a 1,2-diacyl-sn-glycero-3-phospho-L-serine(in) = a 1,2-diacyl-sn-glycero-3-phospho-L-serine(out). It carries out the reaction a 1,2-diacyl-sn-glycero-3-phosphocholine(in) = a 1,2-diacyl-sn-glycero-3-phosphocholine(out). The catalysed reaction is a 1,2-diacyl-sn-glycero-3-phosphoethanolamine(in) = a 1,2-diacyl-sn-glycero-3-phosphoethanolamine(out). In terms of biological role, restriction factor required to restrict infectivity of gammaretroviruses: acts by inhibiting an early step of viral infection. Impairs the penetration of the viral particle into the cytoplasm. Non-ATP-dependent, non-specific lipid transporter for phosphatidylserine, phosphatidylcholine, and phosphatidylethanolamine. Functions as a scramblase that flips lipids in both directions across the membrane. Phospholipid scrambling results in gammaretroviral surface exposure of phosphatidylserine and loss of membrane asymmetry, which leads to loss of infectivity. Enhances the incorporation of serine into phosphatidylserine and sphingolipids. May play a role in providing serine molecules for the formation of myelin glycosphingolipids in oligodendrocytes. This chain is Serine incorporator 5 (SERINC5), found in Macaca fascicularis (Crab-eating macaque).